Here is a 190-residue protein sequence, read N- to C-terminus: RNA-binding protein OPG065 (190 aa).

Positions 5–70 (YIDERSNAEI…DIPPRWFMTT (66 aa)) constitute a Z-binding domain. The region spanning 117–184 (NPVTVINEYC…AKLAVDKLLG (68 aa)) is the DRBM domain.

It belongs to the orthopoxvirus OPG065 family. In terms of assembly, interacts with host G1P2/ISG15. Interacts with host EIF2AK2/PKR. Interacts with host ZBP1.

Its function is as follows. RNA-binding protein that plays a role in the inhibition of multiple cellular antiviral responses activated by double-stranded RNA (dsRNA), such as inhibition of PKR activation, necroptosis, and IFN-mediated antiviral activities. Recognizes and binds Z-RNA structures via its Z-binding domain and dsRNA via its DRBM domain: RNA-binding activity is required to escape host ZBP1-dependent necroptosis. Mechanistically, the Z-binding domain binds Z-RNAs that are produced during vaccinia virus infection, thereby competing with Z-RNA detection by host ZBP1, suppressing ZBP1-dependent necroptosis. Acts as a key inhibitor of the interferon response by blocking the phosphorylation and subsequent activation of IRF3 and IRF7 kinases that are required for interferon-alpha gene expression. Inhibits NF-kappa-B activation and the ubiquitin-like protein ISG15, which is an early antiviral protein. The binding with host ISG15 subsequently blocks host ISGylation. The polypeptide is RNA-binding protein OPG065 (OPG065) (Vaccinia virus (strain Western Reserve) (VACV)).